The primary structure comprises 652 residues: Nitrate reductase-like protein NarX (652 aa).

The nitrate reductase alpha subunit stretch occupies residues 1–251 (MTVTPRTGSR…FGDQTDVPES (251 aa)). The region spanning 53-117 (DKVVRSTHGV…AFSWYTYSPT (65 aa)) is the 4Fe-4S Mo/W bis-MGD-type domain. [4Fe-4S] cluster-binding residues include histidine 60, cysteine 64, cysteine 68, and cysteine 103. Aspartate 233 lines the Mo-bis(molybdopterin guanine dinucleotide) pocket. Positions 258–415 (VWQCASVLLT…TVAAVCRTGD (158 aa)) are nitrate reductase delta subunit. A run of 5 helical transmembrane segments spans residues 416 to 436 (MMGE…VAVG), 466 to 486 (PMFH…LVIP), 504 to 524 (AVVL…LLIY), 545 to 565 (LVLV…SGVV), and 595 to 615 (APLY…LWPF). The tract at residues 416–652 (MMGELFWTVV…VLTRPRRRGW (237 aa)) is nitrate reductase gamma subunit. Heme b is bound by residues histidine 469 and histidine 479. Heme b contacts are provided by histidine 602 and histidine 620.

The protein in the N-terminal section; belongs to the nitrate reductase alpha subunit family. This sequence in the central section; belongs to the NarJ/NarW family. In the C-terminal section; belongs to the nitrate reductase gamma subunit family. It depends on [4Fe-4S] cluster as a cofactor. The cofactor is Mo-bis(molybdopterin guanine dinucleotide). Heme b is required as a cofactor.

The protein localises to the cell membrane. Functionally, does not seem to have nitrate reductase activity. The protein is Nitrate reductase-like protein NarX (narX) of Mycobacterium tuberculosis (strain CDC 1551 / Oshkosh).